The chain runs to 851 residues: Phosphatidylinositol 4-kinase pik1 (851 aa).

One can recognise a PIK helical domain in the interval 1-123; the sequence is MPSSNSGNEL…KICKRLYNRI (123 aa). Phosphoserine occurs at positions 202, 219, 222, and 235. Tyr-236 carries the phosphotyrosine modification. Residues 384–404 form a disordered region; sequence LQDSTDNDISESESEGGDLSM. Positions 388-399 are enriched in acidic residues; the sequence is TDNDISESESEG. Positions 558–836 constitute a PI3K/PI4K catalytic domain; the sequence is YAKKERIRKS…LIQKANCSVW (279 aa). The segment at 564–570 is G-loop; it reads IRKSSPY. Residues 706–714 form a catalytic loop region; the sequence is QLKDRHNGN. The tract at residues 725–749 is activation loop; the sequence is HIDFGFLLTNTPGNVGFESAPFKLT.

Belongs to the PI3/PI4-kinase family. In terms of assembly, interacts with cdc4 and cam2.

The protein resides in the golgi apparatus. It localises to the nucleus. The enzyme catalyses a 1,2-diacyl-sn-glycero-3-phospho-(1D-myo-inositol) + ATP = a 1,2-diacyl-sn-glycero-3-phospho-(1D-myo-inositol 4-phosphate) + ADP + H(+). Functionally, acts on phosphatidylinositol (PI) in the first committed step in the production of the second messenger inositol 1,4,5,-trisphosphate. PIK1 is part of a nuclear phosphoinositide cycle and could control cytokinesis through the actin cytoskeleton. The protein is Phosphatidylinositol 4-kinase pik1 (pik1) of Schizosaccharomyces pombe (strain 972 / ATCC 24843) (Fission yeast).